Here is a 506-residue protein sequence, read N- to C-terminus: uncharacterized protein (506 aa).

It to R.prowazekii RP789, RP027 and RP028.

This is an uncharacterized protein from Synechocystis sp. (strain ATCC 27184 / PCC 6803 / Kazusa).